A 956-amino-acid chain; its full sequence is uncharacterized protein (956 aa).

The Fibronectin type-III domain occupies Pro-40 to Ala-141. Disordered stretches follow at residues Arg-152–Leu-173 and Asn-488–His-600. 2 stretches are compositionally biased toward polar residues: residues Asn-153 to Asn-165 and Asn-488 to Gly-523. The residue at position 154 (Thr-154) is a Phosphothreonine. Phosphoserine is present on residues Ser-501 and Ser-520. A compositionally biased stretch (low complexity) spans Ser-524 to Ala-543. The span at Val-552–Pro-563 shows a compositional bias: polar residues. Over residues Ser-564–Asp-574 the composition is skewed to low complexity. Over residues Arg-578 to Ser-599 the composition is skewed to polar residues. Phosphoserine occurs at positions 802, 842, and 895. Residues Val-875–Ser-956 form a disordered region. A compositionally biased stretch (low complexity) spans Ser-895–Ser-904.

This is an uncharacterized protein from Saccharomyces cerevisiae (strain ATCC 204508 / S288c) (Baker's yeast).